Here is a 245-residue protein sequence, read N- to C-terminus: Probable phosphatase YcdX (245 aa).

Zn(2+) is bound by residues H7, H9, H15, H40, E73, H101, H131, D192, and H194.

Belongs to the PHP family. As to quaternary structure, homotrimer. Zn(2+) is required as a cofactor.

The polypeptide is Probable phosphatase YcdX (Escherichia coli (strain K12 / MC4100 / BW2952)).